The following is a 263-amino-acid chain: Complement C1q tumor necrosis factor-related protein 6 (263 aa).

The first 24 residues, 1-24 (MRVIMGTASLGSIWAVFLLPLVFG), serve as a signal peptide directing secretion. Asparagine 76 is a glycosylation site (N-linked (GlcNAc...) asparagine). Positions 80 to 123 (LKGDKGDRGPSGTPGKPGKNGTRGDRGSQGIKGDKGQAGSPGSS) are disordered. Positions 82–123 (GDKGDRGPSGTPGKPGKNGTRGDRGSQGIKGDKGQAGSPGSS) constitute a Collagen-like domain. The region spanning 124–263 (CQTHYSAFSV…SGHLIKAEDN (140 aa)) is the C1q domain.

It localises to the secreted. The sequence is that of Complement C1q tumor necrosis factor-related protein 6 (C1qtnf6) from Rattus norvegicus (Rat).